Consider the following 346-residue polypeptide: Elongation factor 1-alpha (346 aa).

Positions 1 to 127 constitute a tr-type G domain; that stretch reads GTSQADVALL…DNVEPPKRPS (127 aa). 49 to 52 provides a ligand contact to GTP; the sequence is NKMD.

It belongs to the TRAFAC class translation factor GTPase superfamily. Classic translation factor GTPase family. EF-Tu/EF-1A subfamily.

It is found in the cytoplasm. Functionally, this protein promotes the GTP-dependent binding of aminoacyl-tRNA to the A-site of ribosomes during protein biosynthesis. The sequence is that of Elongation factor 1-alpha from Eimeria bovis.